Reading from the N-terminus, the 371-residue chain is tRNA-specific 2-thiouridylase MnmA (371 aa).

Residues 24-31 (AMSGGVDS) and leucine 50 contribute to the ATP site. Catalysis depends on cysteine 120, which acts as the Nucleophile. An intrachain disulfide couples cysteine 120 to cysteine 216. An ATP-binding site is contributed by glycine 144. The segment at 166–168 (KDQ) is interaction with tRNA. The Cysteine persulfide intermediate role is filled by cysteine 216.

Belongs to the MnmA/TRMU family.

It is found in the cytoplasm. It carries out the reaction S-sulfanyl-L-cysteinyl-[protein] + uridine(34) in tRNA + AH2 + ATP = 2-thiouridine(34) in tRNA + L-cysteinyl-[protein] + A + AMP + diphosphate + H(+). Functionally, catalyzes the 2-thiolation of uridine at the wobble position (U34) of tRNA, leading to the formation of s(2)U34. This chain is tRNA-specific 2-thiouridylase MnmA, found in Wolbachia sp. subsp. Brugia malayi (strain TRS).